The primary structure comprises 86 residues: Large ribosomal subunit protein bL27 (86 aa).

The span at 1–10 shows a compositional bias: gly residues; that stretch reads MAQKKGGGST. A disordered region spans residues 1-21; that stretch reads MAQKKGGGSTRNGRDSESKRL.

This sequence belongs to the bacterial ribosomal protein bL27 family.

This chain is Large ribosomal subunit protein bL27, found in Ralstonia pickettii (strain 12J).